The chain runs to 103 residues: GP16 protein (103 aa).

The chain is GP16 protein (GP16) from Orgyia pseudotsugata multicapsid polyhedrosis virus (OpMNPV).